A 506-amino-acid polypeptide reads, in one-letter code: Tyrosine-protein kinase isoform SRK4 (506 aa).

Polar residues-rich tracts occupy residues 1-10 and 18-31; these read MGSCCSSQDG and AGSTVDSHELSQSV. The segment at 1–53 is disordered; it reads MGSCCSSQDGDGNGKATAGSTVDSHELSQSVKGKIKQPEPKPKPPPQVPPAQD. The 63-residue stretch at 54 to 116 folds into the SH3 domain; it reads VKYPIYVGKY…PSNYVAEYKS (63 aa). The SH2 domain occupies 122-214; it reads WFFGQVKRVD…GLCVNLKGPC (93 aa). One can recognise a Protein kinase domain in the interval 240–493; the sequence is IKLLRGLGAG…TLSWQLEEFF (254 aa). ATP contacts are provided by residues 246–254 and Lys268; that span reads LGAGQFGEV. Asp359 serves as the catalytic Proton acceptor.

This sequence belongs to the protein kinase superfamily. Tyr protein kinase family.

The protein resides in the cytoplasm. The catalysed reaction is L-tyrosyl-[protein] + ATP = O-phospho-L-tyrosyl-[protein] + ADP + H(+). The chain is Tyrosine-protein kinase isoform SRK4 (SRK1) from Spongilla lacustris (Freshwater sponge).